The primary structure comprises 994 residues: Beta-galactosidase (994 aa).

Residue E437 is the Proton donor of the active site. The Nucleophile role is filled by E510.

It belongs to the glycosyl hydrolase 2 family.

The catalysed reaction is Hydrolysis of terminal non-reducing beta-D-galactose residues in beta-D-galactosides.. In Staphylococcus xylosus, this protein is Beta-galactosidase (lacZ).